The sequence spans 324 residues: Stomatin-like protein stl-1 (324 aa).

It belongs to the band 7/mec-2 family. As to expression, widely expressed in most tissues, including body wall muscles, intestinal epithelia, and pharynx and head neurons.

The protein resides in the mitochondrion. In terms of biological role, mitochondrial protein that probably regulates the biogenesis and the activity of mitochondria. In neurons, involved in mitochondrial fusion and recovery of normal locomotory behavior during reoxygenation; probably acts independently of egl-9 and the canonical hypoxia response pathway. The sequence is that of Stomatin-like protein stl-1 from Caenorhabditis elegans.